The sequence spans 404 residues: Nesprin-4 (404 aa).

Disordered regions lie at residues 1 to 91 (MALS…GGKH) and 277 to 347 (GQRG…GAPD). Topologically, residues 1 to 355 (MALSLPLGPR…PDPASRQPLT (355 aa)) are cytoplasmic. The span at 39-52 (EESTSPEQAQTLGQ) shows a compositional bias: polar residues. A compositionally biased stretch (basic residues) spans 307–320 (HQKRLARHQRHSLL). A KASH domain is found at 347–404 (DPASRQPLTFLLILFLLFLLLVGAMFLLPASGGPCCSHARIPRTPYLVLSYVNGLPPV). The chain crosses the membrane as a helical; Anchor for type IV membrane protein span at residues 356 to 376 (FLLILFLLFLLLVGAMFLLPA). At 377-404 (SGGPCCSHARIPRTPYLVLSYVNGLPPV) the chain is on the perinuclear space side.

Belongs to the nesprin family. In terms of assembly, core component of LINC complexes which are composed of inner nuclear membrane SUN domain-containing proteins coupled to outer nuclear membrane KASH domain-containing nesprins. SUN and KASH domain-containing proteins seem to bind each other promiscuously; however, differentially expression of LINC complex constituents can give rise to specific assemblies. Probably part of a SUN1-containing LINC complex. Interacts with kinesins KIF5B and KLC1. The disulfid bond with SUN1 or SUN2 is required for stability of the respective LINC complex under tensile forces.

Its subcellular location is the nucleus outer membrane. Its function is as follows. As a component of the LINC (LInker of Nucleoskeleton and Cytoskeleton) complex, involved in the connection between the nuclear lamina and the cytoskeleton. The nucleocytoplasmic interactions established by the LINC complex play an important role in the transmission of mechanical forces across the nuclear envelope and in nuclear movement and positioning. Behaves as a kinesin cargo, providing a functional binding site for kinesin-1 at the nuclear envelope. Hence may contribute to the establishment of secretory epithelial morphology by promoting kinesin-dependent apical migration of the centrosome and Golgi apparatus and basal localization of the nucleus. In Homo sapiens (Human), this protein is Nesprin-4 (SYNE4).